The chain runs to 394 residues: 1-deoxy-D-xylulose 5-phosphate reductoisomerase (394 aa).

The NADPH site is built by Thr14, Gly15, Ser16, Ile17, Gly40, and Asn128. Lys129 serves as a coordination point for 1-deoxy-D-xylulose 5-phosphate. Glu130 serves as a coordination point for NADPH. Residue Asp154 coordinates Mn(2+). Ser155, Glu156, Ser180, and His203 together coordinate 1-deoxy-D-xylulose 5-phosphate. Residue Glu156 coordinates Mn(2+). Gly209 lines the NADPH pocket. The 1-deoxy-D-xylulose 5-phosphate site is built by Ser216, Asn221, Lys222, and Glu225. Residue Glu225 coordinates Mn(2+).

It belongs to the DXR family. Mg(2+) is required as a cofactor. Mn(2+) serves as cofactor.

It carries out the reaction 2-C-methyl-D-erythritol 4-phosphate + NADP(+) = 1-deoxy-D-xylulose 5-phosphate + NADPH + H(+). The protein operates within isoprenoid biosynthesis; isopentenyl diphosphate biosynthesis via DXP pathway; isopentenyl diphosphate from 1-deoxy-D-xylulose 5-phosphate: step 1/6. Its function is as follows. Catalyzes the NADPH-dependent rearrangement and reduction of 1-deoxy-D-xylulose-5-phosphate (DXP) to 2-C-methyl-D-erythritol 4-phosphate (MEP). This is 1-deoxy-D-xylulose 5-phosphate reductoisomerase from Xylella fastidiosa (strain M12).